We begin with the raw amino-acid sequence, 436 residues long: GTPase Der (436 aa).

2 consecutive EngA-type G domains span residues 4-167 and 175-351; these read PTVA…PVEE and IRFS…ESQN. GTP contacts are provided by residues 10 to 17, 57 to 61, 119 to 122, 181 to 188, 229 to 233, and 294 to 297; these read GRPNVGKS, DTGGI, NKVD, DTAGM, and NKWD. One can recognise a KH-like domain in the interval 352 to 436; it reads KRIPSAVLND…PIHLIARKRK (85 aa).

The protein belongs to the TRAFAC class TrmE-Era-EngA-EngB-Septin-like GTPase superfamily. EngA (Der) GTPase family. Associates with the 50S ribosomal subunit.

In terms of biological role, GTPase that plays an essential role in the late steps of ribosome biogenesis. This is GTPase Der from Streptococcus pyogenes serotype M5 (strain Manfredo).